We begin with the raw amino-acid sequence, 250 residues long: Cell division protein ZapD (250 aa).

The protein belongs to the ZapD family. Interacts with FtsZ.

Its subcellular location is the cytoplasm. Its function is as follows. Cell division factor that enhances FtsZ-ring assembly. Directly interacts with FtsZ and promotes bundling of FtsZ protofilaments, with a reduction in FtsZ GTPase activity. The protein is Cell division protein ZapD of Yersinia enterocolitica serotype O:8 / biotype 1B (strain NCTC 13174 / 8081).